An 831-amino-acid polypeptide reads, in one-letter code: Vi polysaccharide biosynthesis protein TviD (831 aa).

It functions in the pathway glycan metabolism; Vi-antigen biosynthesis. It participates in capsule biogenesis; capsule polysaccharide biosynthesis. May be required for maturation of the Vi polysaccharide. The protein is Vi polysaccharide biosynthesis protein TviD (tviD) of Salmonella typhi.